The chain runs to 90 residues: Probable Fe(2+)-trafficking protein (90 aa).

This sequence belongs to the Fe(2+)-trafficking protein family. In terms of assembly, monomer.

Functionally, could be a mediator in iron transactions between iron acquisition and iron-requiring processes, such as synthesis and/or repair of Fe-S clusters in biosynthetic enzymes. This chain is Probable Fe(2+)-trafficking protein, found in Edwardsiella ictaluri (strain 93-146).